The following is a 173-amino-acid chain: NADH-ubiquinone oxidoreductase chain 6 (173 aa).

The next 5 helical transmembrane spans lie at 1-21 (MTYF…AVAS), 27-47 (YGVV…LSLG), 48-68 (VSFV…VVFV), 87-107 (VVGY…VGGL), and 139-159 (CGVG…FVVL).

This sequence belongs to the complex I subunit 6 family.

The protein localises to the mitochondrion membrane. It carries out the reaction a ubiquinone + NADH + 5 H(+)(in) = a ubiquinol + NAD(+) + 4 H(+)(out). Core subunit of the mitochondrial membrane respiratory chain NADH dehydrogenase (Complex I) that is believed to belong to the minimal assembly required for catalysis. Complex I functions in the transfer of electrons from NADH to the respiratory chain. The immediate electron acceptor for the enzyme is believed to be ubiquinone. The sequence is that of NADH-ubiquinone oxidoreductase chain 6 (MT-ND6) from Synthliboramphus wumizusume (Japanese murrelet).